We begin with the raw amino-acid sequence, 1802 residues long: Protein TIC 214 (1802 aa).

A run of 6 helical transmembrane segments spans residues 19 to 39 (IINSVVVVGLYYGFLTTFSIG), 68 to 88 (FIAGQLMMFISIYYAPLHLAL), 91 to 111 (PHTITVLALPYLLFHFFWNNH), 133 to 153 (VFLNNLIFQLFNHFILPSSML), 176 to 196 (VGWLIGHILFMKWVGLVLVWI), and 227 to 247 (IFSILLFITCVYYLGRIPSPI).

This sequence belongs to the TIC214 family. Part of the Tic complex.

It localises to the plastid. The protein resides in the chloroplast inner membrane. Functionally, involved in protein precursor import into chloroplasts. May be part of an intermediate translocation complex acting as a protein-conducting channel at the inner envelope. The polypeptide is Protein TIC 214 (Nasturtium officinale (Watercress)).